An 859-amino-acid polypeptide reads, in one-letter code: Leucine--tRNA ligase (859 aa).

Residues 42–52 (PYPSGRLHMGH) carry the 'HIGH' region motif. Positions 618 to 622 (KMSKS) match the 'KMSKS' region motif. Lys-621 is an ATP binding site.

This sequence belongs to the class-I aminoacyl-tRNA synthetase family.

Its subcellular location is the cytoplasm. The enzyme catalyses tRNA(Leu) + L-leucine + ATP = L-leucyl-tRNA(Leu) + AMP + diphosphate. The sequence is that of Leucine--tRNA ligase from Shewanella baltica (strain OS155 / ATCC BAA-1091).